The following is a 427-amino-acid chain: Serine hydroxymethyltransferase (427 aa).

120–122 (GHI) is a binding site for (6S)-5,6,7,8-tetrahydrofolate. Position 226 is an N6-(pyridoxal phosphate)lysine (lysine 226).

This sequence belongs to the SHMT family. As to quaternary structure, homodimer. The cofactor is pyridoxal 5'-phosphate.

The protein resides in the cytoplasm. It functions in the pathway amino-acid biosynthesis; glycine biosynthesis; glycine from L-serine: step 1/1. Catalyzes the reversible interconversion of serine and glycine with a modified folate serving as the one-carbon carrier. Also exhibits a pteridine-independent aldolase activity toward beta-hydroxyamino acids, producing glycine and aldehydes, via a retro-aldol mechanism. In Pyrococcus horikoshii (strain ATCC 700860 / DSM 12428 / JCM 9974 / NBRC 100139 / OT-3), this protein is Serine hydroxymethyltransferase.